We begin with the raw amino-acid sequence, 542 residues long: Chaperonin GroEL (542 aa).

Residues 29 to 32 (TLGP), 86 to 90 (DGTTT), Gly413, 477 to 479 (NAA), and Asp493 contribute to the ATP site.

It belongs to the chaperonin (HSP60) family. As to quaternary structure, forms a cylinder of 14 subunits composed of two heptameric rings stacked back-to-back. Interacts with the co-chaperonin GroES.

The protein resides in the cytoplasm. The enzyme catalyses ATP + H2O + a folded polypeptide = ADP + phosphate + an unfolded polypeptide.. Functionally, together with its co-chaperonin GroES, plays an essential role in assisting protein folding. The GroEL-GroES system forms a nano-cage that allows encapsulation of the non-native substrate proteins and provides a physical environment optimized to promote and accelerate protein folding. This Heliobacterium modesticaldum (strain ATCC 51547 / Ice1) protein is Chaperonin GroEL.